A 93-amino-acid chain; its full sequence is Small ribosomal subunit protein bS16 (93 aa).

It belongs to the bacterial ribosomal protein bS16 family.

In Roseiflexus castenholzii (strain DSM 13941 / HLO8), this protein is Small ribosomal subunit protein bS16.